We begin with the raw amino-acid sequence, 263 residues long: Pheophorbidase (263 aa).

Residues 13–244 form the AB hydrolase-1 domain; it reads HFVFVHGASH…LEESDHSAFF (232 aa). Residue S88 is the Acyl-ester intermediate of the active site. Residues D212 and H240 each act as charge relay system in the active site.

Belongs to the AB hydrolase superfamily. Homodimer.

It is found in the cytoplasm. It carries out the reaction pheophorbide a + H2O + H(+) = pyropheophorbide a + methanol + CO2. With respect to regulation, inhibited by methanol and phenylmethylsulfonicfluoride (PMSF). In terms of biological role, involved in chlorophyll degradation. Specific for the pheophorbides of the dihydroporphyrin and tetrahydroporphyrin types. Chlorophyllide a, pheophytin a and the nonfluorescent chlorophyll catabolite (NCC) are not used as substrates. The chain is Pheophorbidase (PPD) from Raphanus sativus (Radish).